A 314-amino-acid chain; its full sequence is tRNA pseudouridine synthase B (314 aa).

Position 43 (histidine 43) interacts with substrate. Residue aspartate 48 is the Nucleophile of the active site. Substrate is bound by residues tyrosine 76, tyrosine 179, and leucine 200.

This sequence belongs to the pseudouridine synthase TruB family. Type 1 subfamily.

The catalysed reaction is uridine(55) in tRNA = pseudouridine(55) in tRNA. In terms of biological role, responsible for synthesis of pseudouridine from uracil-55 in the psi GC loop of transfer RNAs. In Salmonella typhi, this protein is tRNA pseudouridine synthase B.